A 319-amino-acid chain; its full sequence is tRNA dimethylallyltransferase (319 aa).

16-23 contacts ATP; that stretch reads GPTASGKS. 18–23 is a binding site for substrate; that stretch reads TASGKS. The interaction with substrate tRNA stretch occupies residues 46–49; sequence DSMV.

The protein belongs to the IPP transferase family. In terms of assembly, monomer. Mg(2+) serves as cofactor.

The catalysed reaction is adenosine(37) in tRNA + dimethylallyl diphosphate = N(6)-dimethylallyladenosine(37) in tRNA + diphosphate. In terms of biological role, catalyzes the transfer of a dimethylallyl group onto the adenine at position 37 in tRNAs that read codons beginning with uridine, leading to the formation of N6-(dimethylallyl)adenosine (i(6)A). This Cutibacterium acnes (strain DSM 16379 / KPA171202) (Propionibacterium acnes) protein is tRNA dimethylallyltransferase.